The following is a 268-amino-acid chain: Indole-3-glycerol phosphate synthase (268 aa).

Belongs to the TrpC family.

It catalyses the reaction 1-(2-carboxyphenylamino)-1-deoxy-D-ribulose 5-phosphate + H(+) = (1S,2R)-1-C-(indol-3-yl)glycerol 3-phosphate + CO2 + H2O. The protein operates within amino-acid biosynthesis; L-tryptophan biosynthesis; L-tryptophan from chorismate: step 4/5. The chain is Indole-3-glycerol phosphate synthase from Acinetobacter baumannii (strain ACICU).